Consider the following 206-residue polypeptide: Small ribosomal subunit protein uS4 (206 aa).

The interval 18-46 (NIWGRPKSPVNRREYGPGQHGQRRKGKLS) is disordered. In terms of domain architecture, S4 RNA-binding spans 94–156 (RRLDAVVYRA…SKQNVAVLEA (63 aa)).

The protein belongs to the universal ribosomal protein uS4 family. Part of the 30S ribosomal subunit. Contacts protein S5. The interaction surface between S4 and S5 is involved in control of translational fidelity.

In terms of biological role, one of the primary rRNA binding proteins, it binds directly to 16S rRNA where it nucleates assembly of the body of the 30S subunit. With S5 and S12 plays an important role in translational accuracy. The polypeptide is Small ribosomal subunit protein uS4 (Ruegeria sp. (strain TM1040) (Silicibacter sp.)).